Reading from the N-terminus, the 61-residue chain is MKFLLFLSVALLLTSFIETEAGPVNEAGVERLFRALVGRGCPADCPNTCDSSNKCSPGFPG.

Positions 1-21 (MKFLLFLSVALLLTSFIETEA) are cleaved as a signal peptide. Positions 22 to 38 (GPVNEAGVERLFRALVG) are excised as a propeptide. Position 57 is a 4-hydroxyproline; partial (P57). P60 carries the post-translational modification Proline amide.

Post-translationally, contains 2 disulfide bonds. Expressed by the venom duct.

It localises to the secreted. In terms of biological role, probable neurotoxin with unknown target. Possibly targets ion channels. The sequence is that of Conotoxin Cal14.6 from Californiconus californicus (California cone).